The chain runs to 495 residues: Cardiolipin synthase A (495 aa).

Helical transmembrane passes span 9-29 (IEVL…WLIT) and 46-66 (MAWL…YLLL). 2 consecutive PLD phosphodiesterase domains span residues 227–254 (MDLR…IDPK) and 408–435 (EGGL…DMRS). Catalysis depends on residues histidine 232, lysine 234, aspartate 239, histidine 413, lysine 415, and aspartate 420.

Belongs to the phospholipase D family. Cardiolipin synthase subfamily. ClsA sub-subfamily.

The protein resides in the cell membrane. It carries out the reaction 2 a 1,2-diacyl-sn-glycero-3-phospho-(1'-sn-glycerol) = a cardiolipin + glycerol. Catalyzes the reversible phosphatidyl group transfer from one phosphatidylglycerol molecule to another to form cardiolipin (CL) (diphosphatidylglycerol) and glycerol. The chain is Cardiolipin synthase A from Wigglesworthia glossinidia brevipalpis.